The following is a 142-amino-acid chain: Ribosome maturation factor RimP (142 aa).

This sequence belongs to the RimP family.

The protein resides in the cytoplasm. Its function is as follows. Required for maturation of 30S ribosomal subunits. This is Ribosome maturation factor RimP from Sulfurovum sp. (strain NBC37-1).